Reading from the N-terminus, the 590-residue chain is MSRTPSSLDKDKGSSEFVENMNEIEIIEHTRVPSDKPSGFGGHLIDENLVKVEGEDKVTPYLCFLISASAIAGFLFGYDTGVVGVALPLVGTDLGGSVLSSSQQEIITAGTTIGAIFGSAILGGWGDRLGRKVAILIADVFFTVGAVLIAASYSVPQMIVGRIVLGVGVGGAAAIAPLFITETAPTAVRGRCIGVNAFFIPFGQVISEAIGAGVQDMKNGWRLLFALGAVPSLFQLILFHYLPESPRILILRGQTDRARHVFSRIYPNATPEMIDYKFRVAQEYVTATTVLQSGTTYWQRTKTLFTKGSYRRSIVTVSLIQMAGQLSGFNTLLYYAGTLFSLLGLTNPALGGLIPAGTNAFFVLVGMTLVDKVGRRGLLMFGVPIMLAGLVWNIVAFHYLCIPTGGLLDTSYKYDTKLVGIVIGGIVFFTTGFGLTYSHLAWYQSEFLALEVRSVGSGIATTANWVANLVVSVSYLTELETLTPSGTYGLYLGFSVVFFIFAVFCYPETKQLSIDETSLLFEEDWGVKRSREMRRERRETQRRLADSEMTEVATAHVQAQKQKDSAVTRSELDNFMEELKNGAKRFPISR.

The Cytoplasmic portion of the chain corresponds to 1-63 (MSRTPSSLDK…GEDKVTPYLC (63 aa)). Residues 64 to 86 (FLISASAIAGFLFGYDTGVVGVA) form a helical membrane-spanning segment. Topologically, residues 87 to 105 (LPLVGTDLGGSVLSSSQQE) are extracellular. Residues 106–126 (IITAGTTIGAIFGSAILGGWG) form a helical membrane-spanning segment. At 127-132 (DRLGRK) the chain is on the cytoplasmic side. The helical transmembrane segment at 133 to 153 (VAILIADVFFTVGAVLIAASY) threads the bilayer. The Extracellular segment spans residues 154–162 (SVPQMIVGR). Residues 163 to 183 (IVLGVGVGGAAAIAPLFITET) traverse the membrane as a helical segment. The Cytoplasmic portion of the chain corresponds to 184-192 (APTAVRGRC). The helical transmembrane segment at 193-213 (IGVNAFFIPFGQVISEAIGAG) threads the bilayer. The Extracellular segment spans residues 214–222 (VQDMKNGWR). The helical transmembrane segment at 223-243 (LLFALGAVPSLFQLILFHYLP) threads the bilayer. The Cytoplasmic segment spans residues 244-325 (ESPRILILRG…TVSLIQMAGQ (82 aa)). Residues 326–346 (LSGFNTLLYYAGTLFSLLGLT) form a helical membrane-spanning segment. Residues 347–349 (NPA) lie on the Extracellular side of the membrane. The helical transmembrane segment at 350–370 (LGGLIPAGTNAFFVLVGMTLV) threads the bilayer. Topologically, residues 371-376 (DKVGRR) are cytoplasmic. Residues 377–397 (GLLMFGVPIMLAGLVWNIVAF) traverse the membrane as a helical segment. The Extracellular segment spans residues 398-417 (HYLCIPTGGLLDTSYKYDTK). Residues 418–438 (LVGIVIGGIVFFTTGFGLTYS) form a helical membrane-spanning segment. Topologically, residues 439 to 454 (HLAWYQSEFLALEVRS) are cytoplasmic. Residues 455–475 (VGSGIATTANWVANLVVSVSY) form a helical membrane-spanning segment. Residues 476-485 (LTELETLTPS) lie on the Extracellular side of the membrane. Residues 486-506 (GTYGLYLGFSVVFFIFAVFCY) traverse the membrane as a helical segment. Topologically, residues 507-590 (PETKQLSIDE…NGAKRFPISR (84 aa)) are cytoplasmic.

Belongs to the major facilitator superfamily. Sugar transporter (TC 2.A.1.1) family.

Its subcellular location is the cell membrane. It catalyses the reaction myo-inositol(out) + H(+)(out) = myo-inositol(in) + H(+)(in). Functionally, major transporter for myo-inositol. Plays a role in the traversal of the host blood-brain barrier. The polypeptide is Myo-inositol transporter 3C (Cryptococcus neoformans var. grubii serotype A (strain H99 / ATCC 208821 / CBS 10515 / FGSC 9487) (Filobasidiella neoformans var. grubii)).